An 827-amino-acid chain; its full sequence is NT-3 growth factor receptor (827 aa).

An N-terminal signal peptide occupies residues 1 to 31 (MDVSLCPTKCTFWRVFLLWSIWGDYLLSVLA). Disulfide bonds link cysteine 32–cysteine 38 and cysteine 36–cysteine 45. Residues 32 to 430 (CPANCLCSKT…ITVTHKPEED (399 aa)) are Extracellular-facing. Residues asparagine 68, asparagine 72, and asparagine 79 are each glycosylated (N-linked (GlcNAc...) asparagine). LRR repeat units follow at residues 104-125 (GLQRLTIRNSGLRNIQPRAFAK) and 128-149 (HLRYIDLSGNRLTTLSWQLFQT). Positions 160–209 (NPFNCSCDIRWIQLWQEKGEANLQSQQLHCMNLDTAVILLRNMNITQCDL) constitute an LRRCT domain. An N-linked (GlcNAc...) asparagine glycan is attached at asparagine 163. 2 cysteine pairs are disulfide-bonded: cysteine 164/cysteine 189 and cysteine 166/cysteine 207. N-linked (GlcNAc...) asparagine glycosylation is found at asparagine 203, asparagine 218, asparagine 232, asparagine 259, asparagine 267, asparagine 272, and asparagine 294. 2 Ig-like C2-type domains span residues 210-300 (PEIS…VLLT) and 319-382 (HCIA…VATN). Cysteines 231 and 284 form a disulfide. The cysteines at positions 320 and 362 are disulfide-linked. N-linked (GlcNAc...) asparagine glycans are attached at residues asparagine 375 and asparagine 388. A helical transmembrane segment spans residues 431–455 (TFGVSIAVGLAAFACVLLVVLFIMI). The Cytoplasmic segment spans residues 456–827 (NKYGRRSKFG…ATPIYLDILG (372 aa)). The residue at position 518 (tyrosine 518) is a Phosphotyrosine; by autocatalysis. Positions 540 to 812 (IVLKRELGEG…LNIKEIYKIL (273 aa)) constitute a Protein kinase domain. Residues 546 to 554 (LGEGAFGKV) and lysine 574 each bind ATP. Residue aspartate 681 is the Proton acceptor of the active site. Tyrosine 707, tyrosine 711, tyrosine 712, and tyrosine 822 each carry phosphotyrosine; by autocatalysis.

It belongs to the protein kinase superfamily. Tyr protein kinase family. Insulin receptor subfamily. As to quaternary structure, exists in a dynamic equilibrium between monomeric (low affinity) and dimeric (high affinity) structures. Interacts with PTPRS. In terms of processing, ligand-mediated auto-phosphorylation.

It is found in the membrane. The catalysed reaction is L-tyrosyl-[protein] + ATP = O-phospho-L-tyrosyl-[protein] + ADP + H(+). Functionally, receptor tyrosine kinase involved in nervous system and probably heart development. Upon binding of its ligand NTF3/neurotrophin-3, NTRK3 autophosphorylates and activates different signaling pathways, including the phosphatidylinositol 3-kinase/AKT and the MAPK pathways, that control cell survival and differentiation. The KT and KD isoforms fail to stimulate transformation, process outgrowth or survival. Isoform KI25 exhibits tyrosine phosphorylation in the absence of ligand and is unable to mediate survival of neuronal cells. This Gallus gallus (Chicken) protein is NT-3 growth factor receptor (NTRK3).